We begin with the raw amino-acid sequence, 147 residues long: Large ribosomal subunit protein bL9 (147 aa).

This sequence belongs to the bacterial ribosomal protein bL9 family.

Binds to the 23S rRNA. The sequence is that of Large ribosomal subunit protein bL9 from Clostridium kluyveri (strain NBRC 12016).